The chain runs to 413 residues: Probable glucan 1,3-beta-glucosidase ARB_04467 (413 aa).

The signal sequence occupies residues 1–17 (MKFGSLLGLSLVGLSVA). Substrate is bound by residues Glu-46, Glu-202, and Tyr-262. The active-site Proton donor is Glu-202. An intrachain disulfide couples Cys-282 to Cys-412. The active-site Nucleophile is Glu-300.

Belongs to the glycosyl hydrolase 5 (cellulase A) family. In terms of assembly, monomer.

The protein localises to the secreted. Its subcellular location is the cell wall. The catalysed reaction is Successive hydrolysis of beta-D-glucose units from the non-reducing ends of (1-&gt;3)-beta-D-glucans, releasing alpha-glucose.. In terms of biological role, major glucan 1,3-beta-glucosidase required for cell wall integrity. Beta-glucanases participate in the metabolism of beta-glucan, the main structural component of the cell wall. Can also function biosynthetically as a transglycosylase. Functions to deliver glucan from the cell to the extracellular matrix. Involved in cell-substrate and cell-cell adhesion. In Arthroderma benhamiae (strain ATCC MYA-4681 / CBS 112371) (Trichophyton mentagrophytes), this protein is Probable glucan 1,3-beta-glucosidase ARB_04467.